We begin with the raw amino-acid sequence, 374 residues long: Ribosomal RNA large subunit methyltransferase G (374 aa).

Belongs to the methyltransferase superfamily. RlmG family.

It localises to the cytoplasm. It carries out the reaction guanosine(1835) in 23S rRNA + S-adenosyl-L-methionine = N(2)-methylguanosine(1835) in 23S rRNA + S-adenosyl-L-homocysteine + H(+). Specifically methylates the guanine in position 1835 (m2G1835) of 23S rRNA. This is Ribosomal RNA large subunit methyltransferase G from Pseudomonas syringae pv. syringae (strain B728a).